The following is a 251-amino-acid chain: tRNA (guanine-N(1)-)-methyltransferase (251 aa).

S-adenosyl-L-methionine is bound by residues Gly122 and 142-147 (IGDYVL). Positions 226-251 (RARRPDLFATRPQPNRQKPPKNTTDG) are disordered. Positions 237–251 (PQPNRQKPPKNTTDG) are enriched in polar residues.

The protein belongs to the RNA methyltransferase TrmD family. Homodimer.

Its subcellular location is the cytoplasm. It catalyses the reaction guanosine(37) in tRNA + S-adenosyl-L-methionine = N(1)-methylguanosine(37) in tRNA + S-adenosyl-L-homocysteine + H(+). Functionally, specifically methylates guanosine-37 in various tRNAs. The chain is tRNA (guanine-N(1)-)-methyltransferase from Rhodopseudomonas palustris (strain BisB18).